We begin with the raw amino-acid sequence, 216 residues long: Transmembrane emp24 domain-containing protein eca (216 aa).

The first 20 residues, 1–20, serve as a signal peptide directing secretion; it reads MRDQFICLALLLCALHSACG. At 21-182 the chain is on the lumenal side; sequence LYFHISETER…FRHTSESTNS (162 aa). The GOLD domain maps to 30–126; sequence RKCFIEEVPD…QLRVHLDIQV (97 aa). Positions 134 to 164 form a coiled coil; that stretch reads ANVAQKEKLTELQLRIRQLLDQVEQITKEQN. The chain crosses the membrane as a helical span at residues 183 to 203; it reads RVLWWSLAQTLVLVCMGFWQM. The Cytoplasmic segment spans residues 204–216; it reads RHLKSFFEAKKLV. Residues 213–216 carry the Prevents secretion from ER motif; the sequence is KKLV.

Belongs to the EMP24/GP25L family.

The protein localises to the endoplasmic reticulum membrane. In terms of biological role, eca and bai are essential, though not redundant, for dorsoventral patterning of the embryo. Specifically required during early embryogenesis for the activity of maternal tkv, while the zygotic tkv is not affected. Involved in Golgi organization. This chain is Transmembrane emp24 domain-containing protein eca, found in Drosophila pseudoobscura pseudoobscura (Fruit fly).